Here is a 61-residue protein sequence, read N- to C-terminus: Small ribosomal subunit protein uS14 (61 aa).

The Zn(2+) site is built by C24, C27, C40, and C43.

It belongs to the universal ribosomal protein uS14 family. Zinc-binding uS14 subfamily. Part of the 30S ribosomal subunit. Contacts proteins S3 and S10. Zn(2+) is required as a cofactor.

Binds 16S rRNA, required for the assembly of 30S particles and may also be responsible for determining the conformation of the 16S rRNA at the A site. The sequence is that of Small ribosomal subunit protein uS14 from Mycobacterium leprae (strain Br4923).